The following is a 397-amino-acid chain: Polyphosphatase (397 aa).

Mg(2+) is bound by residues Asp-41, Asp-127, and His-148. Mn(2+) contacts are provided by Asp-41, Asp-127, and His-148. His-149, Ser-286, and Arg-381 together coordinate ATP.

It belongs to the PPase class C family. Requires Mn(2+) as cofactor. The cofactor is Mg(2+).

The catalysed reaction is [phosphate](n) + H2O = [phosphate](n-1) + phosphate + H(+). Functionally, polyphosphatase (polyPase) involved in the degradation of inorganic polyphosphates (polyP) that is able to degrade a range of chains from three to several hundreds of residues in a highly processive manner. Exclusively shows exopolyphosphatase activity, cleaving inside the polyP chain. This Saccharomyces cerevisiae (strain ATCC 204508 / S288c) (Baker's yeast) protein is Polyphosphatase.